Reading from the N-terminus, the 616-residue chain is Secretogranin-2 (616 aa).

The signal sequence occupies residues 1–27 (MAEAKTHWLGASLSLILLIFLLATAEA). The propeptide occupies 28 to 30 (ASF). Disordered stretches follow at residues 68 to 104 (QAHK…RDSL) and 120 to 146 (AENE…PMDM). Basic and acidic residues predominate over residues 92–104 (ENSDLPESSRDSL). The segment covering 122 to 140 (NEPQSSLKENKPYTLNSEK) has biased composition (polar residues). A Sulfotyrosine modification is found at Y150. Residues S173, S267, S431, S531, S554, and S555 each carry the phosphoserine modification. Over residues 255–283 (KIESQTQEEVRDSKENIEKNEQINDEMKR) the composition is skewed to basic and acidic residues. Residues 255–290 (KIESQTQEEVRDSKENIEKNEQINDEMKRSGQMGLQ) form a disordered region. The segment covering 548 to 560 (ERLNQHSSQETDK) has biased composition (basic and acidic residues). Positions 548–582 (ERLNQHSSQETDKLALVSKRLPVATPKSDDAPNRQ) are disordered.

This sequence belongs to the chromogranin/secretogranin protein family. As to quaternary structure, interacts with Secretogranin III/SCG3.

Its subcellular location is the secreted. Functionally, neuroendocrine protein of the granin family that regulates the biogenesis of secretory granules. The polypeptide is Secretogranin-2 (SCG2) (Sus scrofa (Pig)).